The sequence spans 548 residues: Cytochrome P450 monooxygenase lcsK (548 aa).

A run of 2 helical transmembrane segments spans residues 28–48 (HAYP…LWAF) and 68–88 (VLLF…RLFF). Residues asparagine 172, asparagine 223, asparagine 242, and asparagine 404 are each glycosylated (N-linked (GlcNAc...) asparagine). Cysteine 487 provides a ligand contact to heme.

It belongs to the cytochrome P450 family. Heme is required as a cofactor.

The protein resides in the membrane. It functions in the pathway secondary metabolite biosynthesis. In terms of biological role, cytochrome P450 monooxygenase; part of the gene cluster that mediates the biosynthesis of the lipopeptide antibiotics leucinostatins that show extensive biological activities, including antimalarial, antiviral, antibacterial, antifungal, and antitumor activities, as well as phytotoxic. Leucinostatin A contains nine amino acid residues, including the unusual amino acid 4-methyl-L-proline (MePro), 2-amino-6-hydroxy-4-methyl-8-oxodecanoic acid (AHyMeOA), 3-hydroxyleucine (HyLeu), alpha-aminoisobutyric acid (AIB), beta-Ala, a 4-methylhex-2-enoic acid at the N-terminus as well as a N1,N1-dimethylpropane-1,2-diamine (DPD) at the C-terminus. The biosynthesis of leucinostatins is probably initiated with the assembly of 4-methylhex-2-enoic acid by a reducing PKS. Two reducing polyketide synthases, lcsB and lcsC, have been identified in the cluster and it is not clear which is the one that assembles 4-methylhex-2-enoic acid since both contain KS, AT, DH, cMT, ER, KR and ACP domains. The polyketide residue might be transferred to the NRPS lcsA, mediated by two additional enzymes, the acyl-CoA ligase lcsD and the thioesterase lcsE. The linear polyketide carboxylic acid, which is released from PKS, is converted to a CoA thioester by lcsD, and then lcsE hydrolyzes the thiol bond and shuttles the polyketide intermediate to lcsA. The C domain of the first module catalyzed the condensation of 4-methylhex-2-enoic acid and MePro carried by domain A1, followed by successive condensations of nine amino acids to trigger the elongation of the linear peptide. A5 and A6 domains of lcsA are proposed to incorporate leucine, A2 AHyMeOA, and A3 incorporates HyLeu. A4, A7 and A8 incorporate AIB. The AHyMeOA in leucinostatin A activated by the A2 might be produced by the second PKS (lcsB or lcsC) present within the cluster. The MePro is probably produced via leucine cyclization and may originate from a separate pathway, independent of the cluster. Another nonproteinogenic amino acid, beta-Ala, could be produced by an aspartic acid decarboxylase also localized outside of the cluster. Two candidates are VFPBJ_01400 and VFPBJ_10476. The final peptide scaffold may be released by the NAD(P)H-dependent thioester reductase (TE) at the C-terminal region of lcsA. Transamination of the lcsA product by the transaminase lcsP may produce DPD at the C-terminus. Further hydroxylation steps performed alternatively by the cytochrome P450 monooxygenases lcsI, lcsK and lcsN then yield the non-methylated leucinostatins precursor. It is also possible that leucines can be hydroxylated prior to their incorporation into the peptide. Varying extents of methylation then lead to the formation of leucinostatins A and B. This is Cytochrome P450 monooxygenase lcsK from Purpureocillium lilacinum (Paecilomyces lilacinus).